Consider the following 492-residue polypeptide: MNNLVKLTISQAVSGLKNKEFTATDLVTAHINQMDKYRYINSYITEIPELALQAAKKSDFLIQNNQARPIEGIPVSIKDLFCTKGILTTAASKMLQNFTPVYDATAYSKIINAGGIMLGKGNMDEFAMGSANINSYFGNVINPWKAESDDVDLTPGGSSGGSSAAVAAFMAMAALGSDTGGSVRQPASYTGTVGIKPSYGRCSRWGMIAFSCSLDQPGVITRTVEDAAIMLEIMMGYDEKDSTSLNAEVPNLRSAVNQPIKGMKIGIPYDLMENRSLSSEIITMWQNTINLLKDHGVEIVSIGLPYINYALPVYYVLSSAEASSNLARYDGVRYGLRVEGKDSNINEIYELSRSEGFGAEVKRRIMMGTYALASTNINSYYIKAQQVRRLIVNDFTNSFNKVDCILIPSAPTAAFPLNSNQDDPVTMYLNDILTIPASLAGLPCISIPAGFSANKLPLGMQVIGSRLDEYNIIKISSAIEKALNLKFIPKGF.

Residues lysine 78 and serine 158 each act as charge relay system in the active site. The active-site Acyl-ester intermediate is serine 182.

Belongs to the amidase family. GatA subfamily. As to quaternary structure, heterotrimer of A, B and C subunits.

It catalyses the reaction L-glutamyl-tRNA(Gln) + L-glutamine + ATP + H2O = L-glutaminyl-tRNA(Gln) + L-glutamate + ADP + phosphate + H(+). Allows the formation of correctly charged Gln-tRNA(Gln) through the transamidation of misacylated Glu-tRNA(Gln) in organisms which lack glutaminyl-tRNA synthetase. The reaction takes place in the presence of glutamine and ATP through an activated gamma-phospho-Glu-tRNA(Gln). In Orientia tsutsugamushi (strain Boryong) (Rickettsia tsutsugamushi), this protein is Glutamyl-tRNA(Gln) amidotransferase subunit A.